A 177-amino-acid chain; its full sequence is Large ribosomal subunit protein uL6 (177 aa).

The protein belongs to the universal ribosomal protein uL6 family. As to quaternary structure, part of the 50S ribosomal subunit.

In terms of biological role, this protein binds to the 23S rRNA, and is important in its secondary structure. It is located near the subunit interface in the base of the L7/L12 stalk, and near the tRNA binding site of the peptidyltransferase center. This is Large ribosomal subunit protein uL6 from Albidiferax ferrireducens (strain ATCC BAA-621 / DSM 15236 / T118) (Rhodoferax ferrireducens).